A 205-amino-acid chain; its full sequence is Small ribosomal subunit protein uS4 (205 aa).

Over residues 1 to 16 (MSKRESAKHKIDRRLG) the composition is skewed to basic and acidic residues. Residues 1–46 (MSKRESAKHKIDRRLGENIWGRPKSPVNRREYGPGQHGQRRKGKLS) form a disordered region. An S4 RNA-binding domain is found at 94–157 (SRLDAVVYRA…KQLAIVLEAV (64 aa)).

The protein belongs to the universal ribosomal protein uS4 family. As to quaternary structure, part of the 30S ribosomal subunit. Contacts protein S5. The interaction surface between S4 and S5 is involved in control of translational fidelity.

One of the primary rRNA binding proteins, it binds directly to 16S rRNA where it nucleates assembly of the body of the 30S subunit. In terms of biological role, with S5 and S12 plays an important role in translational accuracy. This is Small ribosomal subunit protein uS4 from Brucella abortus (strain S19).